Consider the following 119-residue polypeptide: Large ribosomal subunit protein uL22 (119 aa).

The protein belongs to the universal ribosomal protein uL22 family. In terms of assembly, part of the 50S ribosomal subunit.

This protein binds specifically to 23S rRNA; its binding is stimulated by other ribosomal proteins, e.g. L4, L17, and L20. It is important during the early stages of 50S assembly. It makes multiple contacts with different domains of the 23S rRNA in the assembled 50S subunit and ribosome. Functionally, the globular domain of the protein is located near the polypeptide exit tunnel on the outside of the subunit, while an extended beta-hairpin is found that lines the wall of the exit tunnel in the center of the 70S ribosome. The chain is Large ribosomal subunit protein uL22 from Chlorobium luteolum (strain DSM 273 / BCRC 81028 / 2530) (Pelodictyon luteolum).